The chain runs to 851 residues: DNA mismatch repair protein MutS (851 aa).

602-609 (GPNMSGKS) lines the ATP pocket.

This sequence belongs to the DNA mismatch repair MutS family.

In terms of biological role, this protein is involved in the repair of mismatches in DNA. It is possible that it carries out the mismatch recognition step. This protein has a weak ATPase activity. The protein is DNA mismatch repair protein MutS of Streptococcus pyogenes serotype M28 (strain MGAS6180).